Here is a 174-residue protein sequence, read N- to C-terminus: Large ribosomal subunit protein uL18 (174 aa).

It belongs to the universal ribosomal protein uL18 family. Part of the 50S ribosomal subunit. Contacts the 5S and 23S rRNAs.

Functionally, this is one of the proteins that bind and probably mediate the attachment of the 5S RNA into the large ribosomal subunit, where it forms part of the central protuberance. The polypeptide is Large ribosomal subunit protein uL18 (Methanosarcina mazei (strain ATCC BAA-159 / DSM 3647 / Goe1 / Go1 / JCM 11833 / OCM 88) (Methanosarcina frisia)).